Consider the following 97-residue polypeptide: Integration host factor subunit beta (97 aa).

Belongs to the bacterial histone-like protein family. Heterodimer of an alpha and a beta chain.

In terms of biological role, this protein is one of the two subunits of integration host factor, a specific DNA-binding protein that functions in genetic recombination as well as in transcriptional and translational control. The sequence is that of Integration host factor subunit beta from Buchnera aphidicola subsp. Cinara cedri (strain Cc).